The chain runs to 432 residues: Proteinase-activated receptor 1 (432 aa).

The signal sequence occupies residues 1-21 (MGPRRLLLVAVGLSLCGPLLS). A propeptide spans 22 to 45 (SRVPMRQPESERMYATPYATPNPR) (removed for receptor activation). Topologically, residues 46-109 (SFFLRNPSED…SGYLTSPWLT (64 aa)) are extracellular. Asparagine 69 and asparagine 82 each carry an N-linked (GlcNAc...) asparagine glycan. Residues 110 to 135 (LFIPSVYTFVFIVSLPLNILAIAVFV) form a helical membrane-spanning segment. The Cytoplasmic portion of the chain corresponds to 136–144 (FRMKVKKPA). A helical membrane pass occupies residues 145-164 (VVYMLHLAMADVLFVSVLPF). Residues 165-183 (KISYYFSGTDWQFGSGMCR) are Extracellular-facing. Cysteine 182 and cysteine 261 are joined by a disulfide. The chain crosses the membrane as a helical span at residues 184–205 (FATAACYCNMYASIMLMTVISI). Residues 206 to 225 (DRFLAVVYPIQSLSWRTLGR) are Cytoplasmic-facing. Residues 226–246 (ANFTCVVIWVMAIMGVVPLLL) form a helical membrane-spanning segment. Over 247 to 275 (KEQTTQVPGLNITTCHDVLNETLLHGFYS) the chain is Extracellular. Residues asparagine 257 and asparagine 266 are each glycosylated (N-linked (GlcNAc...) asparagine). The chain crosses the membrane as a helical span at residues 276 to 295 (YYFSAFSAIFFLVPLIISTV). Topologically, residues 296–318 (CYTSIIRCLSSSAVANRSKKSRA) are cytoplasmic. Residues 319–341 (LFLSAAVFCIFIVCFGPTNVLLI) traverse the membrane as a helical segment. Over 342–357 (VHYLLLSDSPGTETAY) the chain is Extracellular. A helical membrane pass occupies residues 358-381 (FAYLLCVCVTSVASCIDPLIYYYA). Residues 382–432 (SSECQKHLYSILCCRESSDSNSCNSTGQLMPSKMDTCSSHLNNSIYKKLLA) lie on the Cytoplasmic side of the membrane. At serine 425 the chain carries Phosphoserine.

This sequence belongs to the G-protein coupled receptor 1 family. In terms of processing, proteolytic cleavage by thrombin generates a new N-terminus that functions as a tethered ligand. Also proteolytically cleaved by cathepsin CTSG. Phosphorylated in the C-terminal tail; probably mediating desensitization prior to the uncoupling and internalization of the receptor. In terms of tissue distribution, expressed in primary cultured oligodendrocytes.

The protein resides in the cell membrane. Functionally, high affinity receptor that binds the activated thrombin, leading to calcium release from intracellular stores. The thrombin-activated receptor signaling pathway is mediated through PTX-insensitive G proteins, activation of phospholipase C resulting in the production of 1D-myo-inositol 1,4,5-trisphosphate (InsP3) which binds to InsP3 receptors causing calcium release from the stores. In astrocytes, the calcium released into the cytosol allows the Ca(2+)-dependent release of L-glutamate into the synaptic cleft through BEST1, that targets the neuronal postsynaptic GRIN2A/NMDAR receptor resulting in the synaptic plasticity regulation. May play a role in platelets activation and in vascular development. Mediates up-regulation of pro-inflammatory cytokines, such as MCP-1/CCL2 and IL6, triggered by coagulation factor Xa (F10) in cardiac fibroblasts and umbilical vein endothelial cells. The polypeptide is Proteinase-activated receptor 1 (Rattus norvegicus (Rat)).